A 328-amino-acid polypeptide reads, in one-letter code: GATA transcription factor 17 (328 aa).

A disordered region spans residues 1–68 (MSGHHEAKPY…EEYEGGEGVP (68 aa)). The segment covering 14–29 (RGPAPADEEAAPAAAA) has biased composition (low complexity). Acidic residues-rich tracts occupy residues 30-39 (DEAEAEAEVE) and 47-63 (EQEY…EYEG). The 36-residue stretch at 100–135 (PHVASNTLTLSFQGEVYVFESVSAERVQAVLLLLGG) folds into the Tify domain. A CCT domain is found at 161–203 (RMASLMRFREKRKERNFDKKIRYTVRKEVALRMQRNRGQFTSS). Residues 198–231 (GQFTSSKSKAEEATSVITSSEGSPNWGAVEGRPP) form a disordered region. Residues 236-263 (CHHCGISAASTPMMRRGPDGPRTLCNAC) form a GATA-type zinc finger.

The protein belongs to the type IV zinc-finger family. Class C subfamily.

It is found in the nucleus. Its function is as follows. Transcriptional activator that specifically binds 5'-GATA-3' or 5'-GAT-3' motifs within gene promoters. This is GATA transcription factor 17 from Oryza sativa subsp. japonica (Rice).